We begin with the raw amino-acid sequence, 347 residues long: 5-deoxyribose 1-phosphate isomerase (347 aa).

Substrate contacts are provided by residues 48–50, R91, and Q198; that span reads RGA. D239 serves as the catalytic Proton donor. Substrate is bound at residue 249 to 250; sequence NK.

Belongs to the EIF-2B alpha/beta/delta subunits family. DrdI subfamily.

The enzyme catalyses 5-deoxy-alpha-D-ribose 1-phosphate = 5-deoxy-D-ribulose 1-phosphate. The protein operates within carbohydrate degradation. In terms of biological role, catalyzes the isomerization of 5-deoxy-alpha-D-ribose 1-phosphate to 5-deoxy-D-ribulose 1-phosphate, as part of a 5-deoxyribose salvage pathway that recycles this toxic radical SAM enzyme by-product to mainstream metabolites. This Bacillus thuringiensis (strain Al Hakam) protein is 5-deoxyribose 1-phosphate isomerase.